A 428-amino-acid polypeptide reads, in one-letter code: MAKTVAYFYDPDVGNFHYGAGHPMKPHRLALTHSLVLHYGLYKKMIVFKPYQASQHDMCRFHSEDYIDFLQRVSPTNMQGFTKSLNAFNVGDDCPVFPGLFEFCSRYTGASLQGATQLNNKICDIAINWAGGLHHAKKFEASGFCYVNDIVIGILELLKYHPRVLYIDIDIHHGDGVQEAFYLTDRVMTVSFHKYGNYFFPGTGDMYEVGAESGRYYCLNVPLRDGIDDQSYKHLFQPVISQVVDFYQPTCIVLQCGADSLGCDRLGCFNLSIRGHGECVEYVKSFNIPLLVLGGGGYTVRNVARCWTYETSLLVEEAISEELPYSEYFEYFAPDFTLHPDVSTRIENQNSRQYLDQIRQTIFENLKMLNHAPSVQIHDVPADLLTYDRTDEADAEERGPEENYSRPEAPNEFYDGDHDNDKESDVEI.

Positions 3–316 (KTVAYFYDPD…WTYETSLLVE (314 aa)) are histone deacetylase. 1D-myo-inositol 1,4,5,6-tetrakisphosphate contacts are provided by H17, G21, and K25. Residue H135 is part of the active site. Zn(2+) is bound by residues D170, H172, and D259. Residue R265 coordinates 1D-myo-inositol 1,4,5,6-tetrakisphosphate. 2 stretches are compositionally biased toward basic and acidic residues: residues 388–405 (DRTD…ENYS) and 415–428 (DGDH…DVEI). Positions 388–428 (DRTDEADAEERGPEENYSRPEAPNEFYDGDHDNDKESDVEI) are disordered. Phosphoserine is present on S424.

Belongs to the histone deacetylase family. HD type 1 subfamily. Interacts with HDAC7 and HDAC9. Interacts with DAXX, KDM4A, HDAC10 and DACH1. Found in a complex with NCOR1 and NCOR2. Component of the N-Cor repressor complex, at least composed of NCOR1, NCOR2, HDAC3, TBL1X, TBL1R, CORO2A and GPS2. Interacts with BCOR, MJD2A/JHDM3A, NRIP1, PRDM6 and SRY. Interacts with BTBD14B. Interacts with GLIS2. Interacts (via the DNA-binding domain) with NR2C1; the interaction recruits phosphorylated NR2C1 to PML bodies for sumoylation. Component of the Notch corepressor complex. Interacts with CBFA2T3 and NKAP. Interacts with APEX1; the interaction is not dependent on the acetylated status of APEX1. Interacts with ZMYND15. Interacts with SMRT/NCOR2 and BCL6 on DNA enhancer elements. Interacts with INSM1. Interacts with XBP1 isoform 1; the interaction occurs in endothelial cell (EC) under disturbed flow. Interacts (via C-terminus) with CCAR2 (via N-terminus). Interacts with and deacetylates MEF2D. Interacts with BEND3. Interacts with NKAPL. Interacts with DHX36; this interaction occurs in a RNA-dependent manner. Interacts weakly with CRY1; this interaction is enhanced in the presence of FBXL3. Interacts with FBXL3 and BMAL1. Interacts with NCOR1. Interacts with RARA. Interacts with SETD5. Post-translationally, sumoylated in vitro. In terms of processing, deubiquitinated on 'Lys-63'-linked ubiquitin chains by USP38; leading to a decreased level of histone acetylation.

The protein resides in the nucleus. It localises to the chromosome. The protein localises to the cytoplasm. Its subcellular location is the cytosol. The enzyme catalyses N(6)-acetyl-L-lysyl-[histone] + H2O = L-lysyl-[histone] + acetate. It carries out the reaction N(6)-acetyl-L-lysyl-[protein] + H2O = L-lysyl-[protein] + acetate. It catalyses the reaction N(6)-(2E)-butenoyl-L-lysyl-[protein] + H2O = (2E)-2-butenoate + L-lysyl-[protein]. The catalysed reaction is N(6)-(2-hydroxyisobutanoyl)-L-lysyl-[protein] + H2O = 2-hydroxy-2-methylpropanoate + L-lysyl-[protein]. The enzyme catalyses N(6)-[(S)-lactoyl]-L-lysyl-[protein] + H2O = (S)-lactate + L-lysyl-[protein]. Inositol tetraphosphate (1D-myo-inositol 1,4,5,6-tetrakisphosphate) promotes the histone deacetylase activity by acting as an intermolecular glue between HDAC3 and NCOR2, thereby promoting its association with the N-Cor complex, a prerequisite for the histone deacetylase activity. Its function is as follows. Histone deacetylase that catalyzes the deacetylation of lysine residues on the N-terminal part of the core histones (H2A, H2B, H3 and H4), and some other non-histone substrates. Histone deacetylation gives a tag for epigenetic repression and plays an important role in transcriptional regulation, cell cycle progression and developmental events. Histone deacetylases act via the formation of large multiprotein complexes, such as N-Cor repressor complex, which activate the histone deacetylase activity. Participates in the BCL6 transcriptional repressor activity by deacetylating the H3 'Lys-27' (H3K27) on enhancer elements, antagonizing EP300 acetyltransferase activity and repressing proximal gene expression. Acts as a molecular chaperone for shuttling phosphorylated NR2C1 to PML bodies for sumoylation. Contributes, together with XBP1 isoform 1, to the activation of NFE2L2-mediated HMOX1 transcription factor gene expression in a PI(3)K/mTORC2/Akt-dependent signaling pathway leading to endothelial cell (EC) survival under disturbed flow/oxidative stress. Regulates both the transcriptional activation and repression phases of the circadian clock in a deacetylase activity-independent manner. During the activation phase, promotes the accumulation of ubiquitinated BMAL1 at the E-boxes and during the repression phase, blocks FBXL3-mediated CRY1/2 ubiquitination and promotes the interaction of CRY1 and BMAL1. The NCOR1-HDAC3 complex regulates the circadian expression of the core clock gene BMAL1 and the genes involved in lipid metabolism in the liver. Also functions as deacetylase for non-histone targets, such as KAT5, MEF2D, MAPK14, RARA and STAT3. Serves as a corepressor of RARA, mediating its deacetylation and repression, leading to inhibition of RARE DNA element binding. In addition to protein deacetylase activity, also acts as a protein-lysine deacylase by recognizing other acyl groups: catalyzes removal of (2E)-butenoyl (crotonyl), lactoyl (lactyl) and 2-hydroxyisobutanoyl (2-hydroxyisobutyryl) acyl groups from lysine residues, leading to protein decrotonylation, delactylation and de-2-hydroxyisobutyrylation, respectively. Catalyzes decrotonylation of MAPRE1/EB1. Mediates delactylation NBN/NBS1, thereby inhibiting DNA double-strand breaks (DSBs) via homologous recombination (HR). This chain is Histone deacetylase 3, found in Mus musculus (Mouse).